Reading from the N-terminus, the 110-residue chain is Class I hydrophobin 2 (110 aa).

The first 17 residues, 1–17, serve as a signal peptide directing secretion; the sequence is MQFKFLTTVALATLAVA. Cystine bridges form between Cys-28–Cys-89, Cys-36–Cys-83, Cys-37–Cys-71, and Cys-90–Cys-103. Asn-57 is a glycosylation site (N-linked (GlcNAc...) asparagine).

It belongs to the fungal hydrophobin family. In terms of assembly, self-assembles to form functional amyloid fibrils called rodlets. Self-assembly into fibrillar rodlets occurs spontaneously at hydrophobic:hydrophilic interfaces and the rodlets further associate laterally to form amphipathic monolayers.

It is found in the secreted. Its subcellular location is the cell wall. In terms of biological role, aerial growth, conidiation, and dispersal of filamentous fungi in the environment rely upon a capability of their secreting small amphipathic proteins called hydrophobins (HPBs) with low sequence identity. Class I can self-assemble into an outermost layer of rodlet bundles on aerial cell surfaces, conferring cellular hydrophobicity that supports fungal growth, development and dispersal; whereas Class II form highly ordered films at water-air interfaces through intermolecular interactions but contribute nothing to the rodlet structure. CoH2 is an asexual monokaryon-specific class I hydrophobin that is involved in aerial growth of mycelia. The sequence is that of Class I hydrophobin 2 from Coprinopsis cinerea (Inky cap fungus).